Consider the following 128-residue polypeptide: Protein Wnt-8 (128 aa).

Ser1 carries O-palmitoleoyl serine lipidation. 2 disulfide bridges follow: Cys69/Cys109 and Cys85/Cys102. The N-linked (GlcNAc...) asparagine glycan is linked to Asn72.

The protein belongs to the Wnt family. Post-translationally, palmitoleoylation is required for efficient binding to frizzled receptors. Depalmitoleoylation leads to Wnt signaling pathway inhibition. Proteolytic processing by tiki1 and tiki2 promotes oxidation and formation of large disulfide-bond oligomers, leading to inactivation of wnt8.

It localises to the secreted. The protein localises to the extracellular space. It is found in the extracellular matrix. Functionally, ligand for members of the frizzled family of seven transmembrane receptors. Probable developmental protein. May be a signaling molecule which affects the development of discrete regions of tissues. Is likely to signal over only few cell diameters. The chain is Protein Wnt-8 (WNT-8) from Evasterias troschelii (Mottled sea star).